The chain runs to 345 residues: MGPCGALGLGLLLAAVCGAAAPELHTLRYIQTAMTDPGPGQPWFVTVGYVDGELFVHYNSTARRYVPRTEWIAAKADQQYWDGQTQIGQGNEQIDRENLGILQRRYNQTGGSHTVQWMYGCDILEGGPIRGYYQMAYDGRDFTAFDKGTMTFTAAVPEAVPTKRKWEEESEPERWKNYLEETCVEWLRRYVEYGKAELGRRERPEVRVWGKEADGILTLSCRAHGFYPRPIVVSWLKDGAVRGQDAHSGGIVPNGDGTYHTWVTIDAQPGDGDKYQCRVEHASLPQPGLYSWEPPQPNLVPIVAGVAVAIVAIAIMVGVGFIIYRRHAGKKGKGYNIAPGSNPAI.

A signal peptide spans 1–22; sequence MGPCGALGLGLLLAAVCGAAAP. The alpha-1 stretch occupies residues 23 to 110; that stretch reads ELHTLRYIQT…ILQRRYNQTG (88 aa). Over 23–301 the chain is Extracellular; the sequence is ELHTLRYIQT…WEPPQPNLVP (279 aa). Residues asparagine 59 and asparagine 107 are each glycosylated (N-linked (GlcNAc...) asparagine). Residues 111–201 are alpha-2; that stretch reads GSHTVQWMYG…EYGKAELGRR (91 aa). 2 cysteine pairs are disulfide-bonded: cysteine 121–cysteine 183 and cysteine 221–cysteine 277. The segment at 202–292 is alpha-3; it reads ERPEVRVWGK…SLPQPGLYSW (91 aa). Residues 204 to 293 enclose the Ig-like C1-type domain; that stretch reads PEVRVWGKEA…LPQPGLYSWE (90 aa). The tract at residues 293-301 is connecting peptide; the sequence is EPPQPNLVP. The chain crosses the membrane as a helical span at residues 302–324; sequence IVAGVAVAIVAIAIMVGVGFIIY. The Cytoplasmic portion of the chain corresponds to 325 to 345; the sequence is RRHAGKKGKGYNIAPGSNPAI.

It belongs to the MHC class I family. As to quaternary structure, heterodimer of an alpha chain and a beta chain (beta-2-microglobulin).

Its subcellular location is the membrane. Involved in the presentation of foreign antigens to the immune system. This is Class I histocompatibility antigen, F10 alpha chain from Gallus gallus (Chicken).